We begin with the raw amino-acid sequence, 778 residues long: Serine/threonine-protein kinase BRSK1 (778 aa).

The segment covering 1–12 has biased composition (gly residues); sequence MSSGAKEGGGGS. Residues 1–29 form a disordered region; it reads MSSGAKEGGGGSPAYHLPHPHPHPPQHAQ. A Protein kinase domain is found at 34-285; sequence YRLEKTLGKG…LEQIQKHPWY (252 aa). ATP-binding positions include 40-48 and Lys-63; that span reads LGKGQTGLV. The active-site Proton acceptor is Asp-156. Thr-189 is subject to Phosphothreonine; by LKB1. The 43-residue stretch at 314–356 folds into the UBA domain; sequence ELDPDVLESMASLGCFRDRERLHRELRSEEENQEKMIYYLLLD. A compositionally biased stretch (basic and acidic residues) spans 362–383; it reads PSCEDQDLPPRNDVDPPRKRVD. Residues 362–548 form a disordered region; the sequence is PSCEDQDLPP…SPGGGVGGAA (187 aa). Ser-399, Ser-443, Ser-447, and Ser-450 each carry phosphoserine. The segment covering 430-457 has biased composition (low complexity); that stretch reads SRSVSGASTGLSSSPLSSPRSPVFSFSP. 4 positions are modified to omega-N-methylarginine: Arg-466, Arg-481, Arg-484, and Arg-498. Residues 491 to 508 show a composition bias toward pro residues; sequence QPPPPSARSTPLPGPPGS. A Phosphoserine modification is found at Ser-508. The span at 509–533 shows a compositional bias: low complexity; it reads PRSSGGTPLHSPLHTPRASPTGTPG. Residue Arg-525 is modified to Omega-N-methylarginine. Residues Thr-529 and Thr-535 each carry the phosphothreonine modification. Arg-550 bears the Omega-N-methylarginine mark. Thr-583 carries the post-translational modification Phosphothreonine. Phosphoserine is present on residues Ser-586, Ser-587, and Ser-601. A disordered region spans residues 719 to 778; it reads QPSVQALADEKNGAQTRPAGAPPRSLQPPPGRPDPELSSSPRRGPPKDKKLLATNGTPLP.

It belongs to the protein kinase superfamily. CAMK Ser/Thr protein kinase family. SNF1 subfamily. Mg(2+) serves as cofactor. Post-translationally, phosphorylated at Thr-189 by STK11/LKB1 in complex with STE20-related adapter-alpha (STRADA) pseudo kinase and CAB39. Not phosphorylated at Thr-189 by CaMKK2. In contrast, it is phosphorylated and activated by CaMKK1. May be inactivated via dephosphorylation of Thr-189 by PP2C. As to expression, widely expressed, with highest levels in brain and testis. Protein levels remain constant throughout the cell cycle.

The protein localises to the cytoplasm. It is found in the nucleus. The protein resides in the cytoskeleton. Its subcellular location is the microtubule organizing center. It localises to the centrosome. The protein localises to the synapse. It is found in the presynaptic active zone. The protein resides in the cytoplasmic vesicle. Its subcellular location is the secretory vesicle. It localises to the synaptic vesicle. The enzyme catalyses L-seryl-[protein] + ATP = O-phospho-L-seryl-[protein] + ADP + H(+). The catalysed reaction is L-threonyl-[protein] + ATP = O-phospho-L-threonyl-[protein] + ADP + H(+). It carries out the reaction L-seryl-[tau protein] + ATP = O-phospho-L-seryl-[tau protein] + ADP + H(+). It catalyses the reaction L-threonyl-[tau protein] + ATP = O-phospho-L-threonyl-[tau protein] + ADP + H(+). With respect to regulation, activated by phosphorylation on Thr-189 by STK11/LKB1. Serine/threonine-protein kinase that plays a key role in polarization of neurons and centrosome duplication. Phosphorylates CDC25B, CDC25C, MAPT/TAU, RIMS1, TUBG1, TUBG2 and WEE1. Following phosphorylation and activation by STK11/LKB1, acts as a key regulator of polarization of cortical neurons, probably by mediating phosphorylation of microtubule-associated proteins such as MAPT/TAU at 'Thr-529' and 'Ser-579'. Also regulates neuron polarization by mediating phosphorylation of WEE1 at 'Ser-642' in postmitotic neurons, leading to down-regulate WEE1 activity in polarized neurons. In neurons, localizes to synaptic vesicles and plays a role in neurotransmitter release, possibly by phosphorylating RIMS1. Also acts as a positive regulator of centrosome duplication by mediating phosphorylation of gamma-tubulin (TUBG1 and TUBG2) at 'Ser-131', leading to translocation of gamma-tubulin and its associated proteins to the centrosome. Involved in the UV-induced DNA damage checkpoint response, probably by inhibiting CDK1 activity through phosphorylation and activation of WEE1, and inhibition of CDC25B and CDC25C. The polypeptide is Serine/threonine-protein kinase BRSK1 (BRSK1) (Homo sapiens (Human)).